The sequence spans 278 residues: HTH-type transcriptional activator RhaS (278 aa).

One can recognise an HTH araC/xylS-type domain in the interval 174 to 272; sequence NLLLAWLEDH…NWSPRDIRQG (99 aa). 2 consecutive DNA-binding regions (H-T-H motif) follow at residues 191–212 and 239–262; these read DAVA…KQQT and VTDI…RREF.

Binds DNA as a dimer.

The protein resides in the cytoplasm. Activates expression of the rhaBAD and rhaT operons. The chain is HTH-type transcriptional activator RhaS from Escherichia coli O157:H7.